The following is a 372-amino-acid chain: Tetraacyldisaccharide 4'-kinase (372 aa).

60–67 (TVGGSGKT) is a binding site for ATP.

Belongs to the LpxK family.

It carries out the reaction a lipid A disaccharide + ATP = a lipid IVA + ADP + H(+). Its pathway is glycolipid biosynthesis; lipid IV(A) biosynthesis; lipid IV(A) from (3R)-3-hydroxytetradecanoyl-[acyl-carrier-protein] and UDP-N-acetyl-alpha-D-glucosamine: step 6/6. In terms of biological role, transfers the gamma-phosphate of ATP to the 4'-position of a tetraacyldisaccharide 1-phosphate intermediate (termed DS-1-P) to form tetraacyldisaccharide 1,4'-bis-phosphate (lipid IVA). The protein is Tetraacyldisaccharide 4'-kinase of Psychrobacter cryohalolentis (strain ATCC BAA-1226 / DSM 17306 / VKM B-2378 / K5).